Here is a 1407-residue protein sequence, read N- to C-terminus: Probable phosphoribosylformylglycinamidine synthase, chloroplastic/mitochondrial (1407 aa).

The transit peptide at 1–53 directs the protein to the chloroplast and mitochondrion; it reads MNTSQATRAALFLNGSNRQAMLLQRSSMSQLWGSVRMRTSRLSLNRTKAVSLR. ATP contacts are provided by residues 407–418, 487–489, and Ala786; these read GAETGAGGRIRD and QGY. 4 residues coordinate Mg(2+): Asp787, Glu826, Asn830, and Asp989. Residue Ser991 participates in ATP binding. Residues 1141–1381 enclose the Glutamine amidotransferase type-1 domain; it reads KVAVIREEGS…LMWQFPWYPT (241 aa). Cys1235 serves as the catalytic Nucleophile. Active-site residues include His1366 and Glu1368.

It in the N-terminal section; belongs to the FGAMS family.

The protein localises to the plastid. Its subcellular location is the chloroplast. It localises to the mitochondrion. It catalyses the reaction N(2)-formyl-N(1)-(5-phospho-beta-D-ribosyl)glycinamide + L-glutamine + ATP + H2O = 2-formamido-N(1)-(5-O-phospho-beta-D-ribosyl)acetamidine + L-glutamate + ADP + phosphate + H(+). It functions in the pathway purine metabolism; IMP biosynthesis via de novo pathway; 5-amino-1-(5-phospho-D-ribosyl)imidazole from N(2)-formyl-N(1)-(5-phospho-D-ribosyl)glycinamide: step 1/2. Functionally, essential to the male gametophyte development. Phosphoribosylformylglycinamidine synthase involved in the purines biosynthetic pathway. Catalyzes the ATP-dependent conversion of formylglycinamide ribonucleotide (FGAR) and glutamine to yield formylglycinamidine ribonucleotide (FGAM) and glutamate. In Arabidopsis thaliana (Mouse-ear cress), this protein is Probable phosphoribosylformylglycinamidine synthase, chloroplastic/mitochondrial.